Consider the following 425-residue polypeptide: Nicotinate dehydrogenase large molybdopterin subunit (425 aa).

Se-Mo-molybdopterin cytosine dinucleotide-binding positions include Q208 and 238-240 (GFG).

This sequence belongs to the xanthine dehydrogenase family. As to quaternary structure, heterooctamer of NDHM, NDHL, NDHS and NDHF. Dimer of heterotetramers. Requires Se-Mo-molybdopterin cytosine dinucleotide as cofactor.

It carries out the reaction nicotinate + NADP(+) + H2O = 6-hydroxynicotinate + NADPH + H(+). It functions in the pathway cofactor degradation; nicotinate degradation; 6-hydroxynicotinate from nicotinate: step 1/1. Reversibly inactivated by selenide and sulfide. Not inhibited by cyanide. Catalyzes the hydroxylation of nicotinate to 6-hydroxynicotinate. Also active against 2-pyrazinecarboxylic acid, but inactive against other nicotinate analogs. The polypeptide is Nicotinate dehydrogenase large molybdopterin subunit (ndhL) (Eubacterium barkeri (Clostridium barkeri)).